Consider the following 445-residue polypeptide: Tubulin beta-9 chain (445 aa).

Glutamine 11, glutamate 69, serine 138, glycine 142, threonine 143, glycine 144, asparagine 204, and asparagine 226 together coordinate GTP. Glutamate 69 is a binding site for Mg(2+). Residues 423–445 (QQYQDATADDEEYEEEEEYEAEA) are disordered. Residues 429 to 445 (TADDEEYEEEEEYEAEA) show a composition bias toward acidic residues.

It belongs to the tubulin family. As to quaternary structure, dimer of alpha and beta chains. A typical microtubule is a hollow water-filled tube with an outer diameter of 25 nm and an inner diameter of 15 nM. Alpha-beta heterodimers associate head-to-tail to form protofilaments running lengthwise along the microtubule wall with the beta-tubulin subunit facing the microtubule plus end conferring a structural polarity. Microtubules usually have 13 protofilaments but different protofilament numbers can be found in some organisms and specialized cells. Mg(2+) serves as cofactor.

Its subcellular location is the cytoplasm. The protein resides in the cytoskeleton. In terms of biological role, tubulin is the major constituent of microtubules, a cylinder consisting of laterally associated linear protofilaments composed of alpha- and beta-tubulin heterodimers. Microtubules grow by the addition of GTP-tubulin dimers to the microtubule end, where a stabilizing cap forms. Below the cap, tubulin dimers are in GDP-bound state, owing to GTPase activity of alpha-tubulin. This Gossypium hirsutum (Upland cotton) protein is Tubulin beta-9 chain.